Consider the following 277-residue polypeptide: Antigen 1 (277 aa).

A signal peptide spans 1-16 (MQLLALTLALCASIAA). N-linked (GlcNAc...) asparagine glycosylation is found at N41, N71, N127, and N200. The segment at 230-277 (CVGGEEENDGQGEEQTEEPAQDDQQDEAAEEEIPENCHTHEGGELHCT) is disordered. A compositionally biased stretch (acidic residues) spans 233–263 (GEEENDGQGEEQTEEPAQDDQQDEAAEEEIP). Positions 264–277 (ENCHTHEGGELHCT) are enriched in basic and acidic residues.

This sequence belongs to the ZPS1 family.

This is Antigen 1 (aspnd1) from Emericella nidulans (strain FGSC A4 / ATCC 38163 / CBS 112.46 / NRRL 194 / M139) (Aspergillus nidulans).